Consider the following 296-residue polypeptide: Probable endonuclease 4 (296 aa).

Positions 69, 109, 160, 194, 197, 231, 244, 246, and 276 each coordinate Zn(2+).

The protein belongs to the AP endonuclease 2 family. It depends on Zn(2+) as a cofactor.

The catalysed reaction is Endonucleolytic cleavage to 5'-phosphooligonucleotide end-products.. Functionally, endonuclease IV plays a role in DNA repair. It cleaves phosphodiester bonds at apurinic or apyrimidinic (AP) sites, generating a 3'-hydroxyl group and a 5'-terminal sugar phosphate. This is Probable endonuclease 4 from Sulfurovum sp. (strain NBC37-1).